A 181-amino-acid chain; its full sequence is ATP synthase subunit delta (181 aa).

This sequence belongs to the ATPase delta chain family. F-type ATPases have 2 components, F(1) - the catalytic core - and F(0) - the membrane proton channel. F(1) has five subunits: alpha(3), beta(3), gamma(1), delta(1), epsilon(1). F(0) has three main subunits: a(1), b(2) and c(10-14). The alpha and beta chains form an alternating ring which encloses part of the gamma chain. F(1) is attached to F(0) by a central stalk formed by the gamma and epsilon chains, while a peripheral stalk is formed by the delta and b chains.

The protein resides in the cell inner membrane. Functionally, f(1)F(0) ATP synthase produces ATP from ADP in the presence of a proton or sodium gradient. F-type ATPases consist of two structural domains, F(1) containing the extramembraneous catalytic core and F(0) containing the membrane proton channel, linked together by a central stalk and a peripheral stalk. During catalysis, ATP synthesis in the catalytic domain of F(1) is coupled via a rotary mechanism of the central stalk subunits to proton translocation. In terms of biological role, this protein is part of the stalk that links CF(0) to CF(1). It either transmits conformational changes from CF(0) to CF(1) or is implicated in proton conduction. The chain is ATP synthase subunit delta from Syntrophus aciditrophicus (strain SB).